Here is a 151-residue protein sequence, read N- to C-terminus: D-aminoacyl-tRNA deacylase (151 aa).

The Gly-cisPro motif, important for rejection of L-amino acids motif lies at 137 to 138 (GP).

It belongs to the DTD family. In terms of assembly, homodimer.

The protein localises to the cytoplasm. The catalysed reaction is glycyl-tRNA(Ala) + H2O = tRNA(Ala) + glycine + H(+). The enzyme catalyses a D-aminoacyl-tRNA + H2O = a tRNA + a D-alpha-amino acid + H(+). Functionally, an aminoacyl-tRNA editing enzyme that deacylates mischarged D-aminoacyl-tRNAs. Also deacylates mischarged glycyl-tRNA(Ala), protecting cells against glycine mischarging by AlaRS. Acts via tRNA-based rather than protein-based catalysis; rejects L-amino acids rather than detecting D-amino acids in the active site. By recycling D-aminoacyl-tRNA to D-amino acids and free tRNA molecules, this enzyme counteracts the toxicity associated with the formation of D-aminoacyl-tRNA entities in vivo and helps enforce protein L-homochirality. In Listeria monocytogenes serotype 4a (strain HCC23), this protein is D-aminoacyl-tRNA deacylase.